The primary structure comprises 178 residues: Large ribosomal subunit protein uL13m (178 aa).

Belongs to the universal ribosomal protein uL13 family. In terms of assembly, component of the mitochondrial ribosome large subunit (39S) which comprises a 16S rRNA and about 50 distinct proteins.

The protein resides in the mitochondrion. The protein is Large ribosomal subunit protein uL13m (mRpL13) of Drosophila melanogaster (Fruit fly).